The following is a 383-amino-acid chain: Delta(12) fatty acid desaturase FAD2 (383 aa).

A disordered region spans residues 1–29 (MGAGGRMQDPTNGGNKTEPEPIQRVPHEK). Residues 17 to 29 (TEPEPIQRVPHEK) show a composition bias toward basic and acidic residues. The next 2 helical transmembrane spans lie at 50-70 (VIRS…LYYI) and 85-105 (VAWP…WVIA). The short motif at 106 to 110 (HECGH) is the Histidine box-1 element. Residues 118 to 138 (WLDDTVGLVLHSFLLVPYFSW) form a helical membrane-spanning segment. A Histidine box-2 motif is present at residues 142 to 146 (HRRHH). 3 helical membrane passes run 180-200 (ILTL…FNVS), 226-246 (IFIS…LAMT), and 252-272 (VLTM…LITF). A Histidine box-3 motif is present at residues 316-320 (HVAHH).

The protein belongs to the fatty acid desaturase type 1 family. In terms of tissue distribution, expressed in leaves, flower buds and developing seeds.

Its subcellular location is the membrane. The protein operates within lipid metabolism; polyunsaturated fatty acid biosynthesis. Catalyzes the desaturation of oleic acid to linoleic acid. Introduces a double bond at position 12 of 16:1(9Z) and 18:1(9Z). The protein is Delta(12) fatty acid desaturase FAD2 of Calendula officinalis (Pot marigold).